The following is a 796-amino-acid chain: Toll-like receptor 6 (796 aa).

A signal peptide spans 1 to 31 (MTKDKEPIVKSFHFVCLMIIIVGTRIQFSDG). Topologically, residues 32–586 (NEFAVDKSKR…MSELSCNITL (555 aa)) are extracellular. 19 LRR repeats span residues 54 to 77 (TKVL…FLSE), 78 to 101 (LTVL…FNQD), 102 to 122 (LEYL…PIVS), 123 to 147 (FRHL…NLSQ), 148 to 168 (LNFL…PIAH), 169 to 196 (LHLS…ILNA), 197 to 219 (KTLH…SVNT), 220 to 250 (LGCL…RGST), 251 to 277 (LLNF…WPKP), 278 to 303 (VEYL…SKTT), 304 to 330 (LKAL…VFSE), 331 to 354 (MNIM…APST), 355 to 378 (FKFL…TLVK), 379 to 404 (LETL…DMPS), 405 to 429 (LEIL…WVES), 430 to 450 (IVVL…CLPP), 451 to 474 (RIKV…KLEA), 475 to 496 (LQEL…SFSS), and 497 to 520 (LSVL…SCQK). Cys-117 and Cys-139 are disulfide-bonded. Residue Asn-144 is glycosylated (N-linked (GlcNAc...) asparagine). N-linked (GlcNAc...) asparagine glycans are attached at residues Asn-186 and Asn-214. Cys-235 and Cys-265 are disulfide-bonded. Residues Asn-253 and Asn-285 are each glycosylated (N-linked (GlcNAc...) asparagine). Cys-348 and Cys-373 are oxidised to a cystine. N-linked (GlcNAc...) asparagine glycosylation is present at Asn-359. Residues Asn-423 and Asn-434 are each glycosylated (N-linked (GlcNAc...) asparagine). A disulfide bridge connects residues Cys-424 and Cys-447. In terms of domain architecture, LRRCT spans 521–575 (MRSIKAGDNPFQCTCELREFVKNIDQVSSEVLEGWPDSYKCDYPESYRGSPLKDF). N-linked (GlcNAc...) asparagine glycosylation is present at Asn-583. Residues 587–607 (LIVTIGATMLVLAVTVTSLCI) form a helical membrane-spanning segment. At 608 to 796 (YLDLPWYLRM…LVTENNDVKS (189 aa)) the chain is on the cytoplasmic side. The 142-residue stretch at 640–781 (LQFHAFISYS…LFWANIRAAF (142 aa)) folds into the TIR domain.

Belongs to the Toll-like receptor family. In terms of assembly, homodimer (via cytoplasmic TIR domain). Heterodimer with TLR2 via their respective extracellular domains. Binds MYD88 via their respective TIR domains. Interacts with CD36, following CD36 stimulation by oxLDL or amyloid-beta 42, and forms a heterodimer with TLR4. The trimeric complex is internalized and triggers inflammatory response. LYN kinase activity facilitates TLR4:TLR6 heterodimerization and signal initiation. The heterodimer TLR2:TLR6 interacts with CD14 and CD36 in response to triacylated lipopeptides. In terms of tissue distribution, detected in monocytes, CD11c+ immature dendritic cells, plasmacytoid pre-dendritic cells and dermal microvessel endothelial cells.

Its subcellular location is the cell membrane. It is found in the cytoplasmic vesicle. The protein localises to the phagosome membrane. It localises to the membrane raft. The protein resides in the golgi apparatus. In terms of biological role, participates in the innate immune response to Gram-positive bacteria and fungi. Specifically recognizes diacylated and, to a lesser extent, triacylated lipopeptides. In response to diacylated lipopeptides, forms the activation cluster TLR2:TLR6:CD14:CD36, this cluster triggers signaling from the cell surface and subsequently is targeted to the Golgi in a lipid-raft dependent pathway. Acts via MYD88 and TRAF6, leading to NF-kappa-B activation, cytokine secretion and the inflammatory response. Recognizes mycoplasmal macrophage-activating lipopeptide-2kD (MALP-2), soluble tuberculosis factor (STF), phenol-soluble modulin (PSM) and B.burgdorferi outer surface protein A lipoprotein (OspA-L) cooperatively with TLR2. In complex with TLR4, promotes sterile inflammation in monocytes/macrophages in response to oxidized low-density lipoprotein (oxLDL) or amyloid-beta 42. In this context, the initial signal is provided by oxLDL- or amyloid-beta 42-binding to CD36. This event induces the formation of a heterodimer of TLR4 and TLR6, which is rapidly internalized and triggers inflammatory response, leading to the NF-kappa-B-dependent production of CXCL1, CXCL2 and CCL9 cytokines, via MYD88 signaling pathway, and CCL5 cytokine, via TICAM1 signaling pathway, as well as IL1B secretion. This is Toll-like receptor 6 (TLR6) from Homo sapiens (Human).